Reading from the N-terminus, the 391-residue chain is Succinate--CoA ligase [ADP-forming] subunit beta (391 aa).

Residues 9–248 (KDILRKFGVS…TGEEDPFEVE (240 aa)) form the ATP-grasp domain. ATP contacts are provided by residues K50, 57-59 (GRG), E103, M106, and E111. The Mg(2+) site is built by N203 and D217. Residues N268 and 325–327 (GIV) contribute to the substrate site.

Belongs to the succinate/malate CoA ligase beta subunit family. In terms of assembly, heterotetramer of two alpha and two beta subunits. Requires Mg(2+) as cofactor.

The catalysed reaction is succinate + ATP + CoA = succinyl-CoA + ADP + phosphate. It catalyses the reaction GTP + succinate + CoA = succinyl-CoA + GDP + phosphate. It participates in carbohydrate metabolism; tricarboxylic acid cycle; succinate from succinyl-CoA (ligase route): step 1/1. Succinyl-CoA synthetase functions in the citric acid cycle (TCA), coupling the hydrolysis of succinyl-CoA to the synthesis of either ATP or GTP and thus represents the only step of substrate-level phosphorylation in the TCA. The beta subunit provides nucleotide specificity of the enzyme and binds the substrate succinate, while the binding sites for coenzyme A and phosphate are found in the alpha subunit. This is Succinate--CoA ligase [ADP-forming] subunit beta from Chlorobium phaeobacteroides (strain BS1).